We begin with the raw amino-acid sequence, 905 residues long: MPHYQEVDDASGDGGPMAATGPSREAVKKMDQIIQNFHTKAAIIVLGARVGLPVVFTKEGTKKVNKWFQIETDDTDAYRDELHTWRMCGGFQNRPPPLIIETYLDTSHLTSSQRLVIVDDLGKRWDALDALSNSCGSNDGRSEVILERWKIELRDIPGEQPYDFGSTLPTIYKKCIVFFRSLYSTAKLVPAWKFKKSLGKNGSPTNSLIINCRITTGDTQPRRIDGLKQPILDHSGPVTSTYVLGATDTPAGQIFAEVTYRNDCNFRVDDSESILSSRFMGADEHFFTPSLAAKGDLSRRRSTKQTEIGSLPAHKHLTDDSGPVQTYGSLSTFHGNAPPRGSSPMSALRAQRPIGSDTSSPPVGSLPYSRPSLTSKGSLKSFEGMALARRTSLSFQPFKAGSLSSSPSRATYAGETLPASPGSLPRASGISALAQARNRSSLTAGMPATLRGGPVTSDNVVPTSVSSSPKPAPIARYSSSFTHRRSRPSYGGASKLVDDDQGSSGKQSVSSSVQPGSGILAEAGAGGSSGSLQTDDDNISDFLKLLDSKKTLQSFEPSGEASKKRATAQLSKFQSMRDSHNALTDSMASSSMLQRSSSSSSRQLSSVPPMVAATSISAASSPGKPISPHTPHTPAIPSRLSANSIAEYDQPRRVTRRSRTTEARLEDVQDNDHSNDAGTNAIDIPTSPRPYYPHARRSSSVAQQHRALAIDDDLGDLPFGVHRSISLGADDREPPSLSTLLNIGQASDDVESPTGQSPSLLQPAPRISEGSTAMSRQTSSSLEAHDSEVPQLSRFSGPGSANSPYRPRIGKTGGRGVTPPQTGSFSSLLVDRGSASGSERAGGGRYSFSRGIGAYEADDEPLLFDMSEIGRDISRRSIDEPRGGYEASRGGDSGSSSRRGSRWGR.

Disordered stretches follow at residues 1–22 (MPHY…ATGP), 295–377 (GDLS…TSKG), 398–425 (FKAG…GSLP), 444–535 (AGMP…LQTD), 554–704 (SFEP…VAQQ), 747–850 (SDDV…SFSR), and 871–905 (RDIS…RWGR). Residues 323–334 (PVQTYGSLSTFH) show a composition bias toward polar residues. Composition is skewed to low complexity over residues 454–469 (PVTS…SSSP), 502–523 (GSSG…LAEA), and 586–606 (SMAS…QLSS). Basic and acidic residues predominate over residues 659-675 (RTTEARLEDVQDNDHSN). The segment covering 769–782 (EGSTAMSRQTSSSL) has biased composition (polar residues). The segment covering 871-883 (RDISRRSIDEPRG) has biased composition (basic and acidic residues). Over residues 888 to 898 (SRGGDSGSSSR) the composition is skewed to low complexity.

Belongs to the ATG13 family. Fungi subfamily. Interacts with atg1 to form the atg1-atg13 kinase complex.

The protein resides in the cytoplasm. It is found in the preautophagosomal structure. In terms of biological role, activates the atg1 kinase in a nutritional condition dependent manner through the TOR pathway, leading to autophagy. Also involved in cytoplasm to vacuole transport (Cvt) and more specifically in Cvt vesicle formation. Seems to play a role in the switching machinery regulating the conversion between the Cvt pathway and autophagy. Finally, atg13 is also required for glycogen storage during stationary phase. This Sclerotinia sclerotiorum (strain ATCC 18683 / 1980 / Ss-1) (White mold) protein is Autophagy-related protein 13 (atg13).